An 860-amino-acid chain; its full sequence is Leucine--tRNA ligase (860 aa).

The short motif at 42–52 is the 'HIGH' region element; sequence PYPSGRLHMGH. The short motif at 619-623 is the 'KMSKS' region element; sequence KMSKS. K622 is a binding site for ATP.

This sequence belongs to the class-I aminoacyl-tRNA synthetase family.

It is found in the cytoplasm. The catalysed reaction is tRNA(Leu) + L-leucine + ATP = L-leucyl-tRNA(Leu) + AMP + diphosphate. In Histophilus somni (strain 129Pt) (Haemophilus somnus), this protein is Leucine--tRNA ligase.